A 283-amino-acid polypeptide reads, in one-letter code: uncharacterized protein (283 aa).

The segment covering M1 to L10 has biased composition (polar residues). 2 disordered regions span residues M1–S99 and D255–I283. Composition is skewed to basic and acidic residues over residues K14–R34, S42–P53, and E61–V71.

Belongs to the chlamydial CPn_0705/CT_671/TC_0042 family.

This is an uncharacterized protein from Chlamydia trachomatis serovar D (strain ATCC VR-885 / DSM 19411 / UW-3/Cx).